The chain runs to 384 residues: Autophagy-related protein 30 (384 aa).

Positions 1–63 (MFSRKQVQKR…ASPGQLRPRT (63 aa)) are disordered. A compositionally biased stretch (low complexity) spans 13-27 (ELSSLHCSNSSNSLN). Over residues 45-63 (RGNNRSDNVASPGQLRPRT) the composition is skewed to polar residues. Residue serine 112 is modified to Phosphoserine. Positions 266–291 (VKHDKPSSPLPNYHNTLKQAPSSNSQ) are disordered. Residues 278–291 (YHNTLKQAPSSNSQ) show a composition bias toward polar residues.

Interacts with ATG11, ATG17, ATG37, PEX3 and PEX14. In terms of processing, phosphorylation at Ser-112 is required for micro- and macropexophagy.

It is found in the vacuole lumen. The protein resides in the preautophagosomal structure. The protein localises to the peroxisome membrane. Functionally, acts as the peroxisome receptor for pexophagy. Required for both micropexophagy and macropexophagy, but not for the cytoplasm to vacuole transport (Cvt) or autophagy pathways. Required for functional micropexophagic apparatus (MIPA) and relocation of ATG11 to the peroxisome-sequestering arms of the vacuole. This chain is Autophagy-related protein 30 (ATG30), found in Komagataella phaffii (strain GS115 / ATCC 20864) (Yeast).